The following is a 251-amino-acid chain: Triosephosphate isomerase (251 aa).

9–11 contributes to the substrate binding site; that stretch reads NWK. His-95 acts as the Electrophile in catalysis. Catalysis depends on Glu-167, which acts as the Proton acceptor. Residues Gly-173, Ser-213, and 234 to 235 each bind substrate; that span reads GG.

The protein belongs to the triosephosphate isomerase family. As to quaternary structure, homodimer.

The protein localises to the cytoplasm. It catalyses the reaction D-glyceraldehyde 3-phosphate = dihydroxyacetone phosphate. Its pathway is carbohydrate biosynthesis; gluconeogenesis. The protein operates within carbohydrate degradation; glycolysis; D-glyceraldehyde 3-phosphate from glycerone phosphate: step 1/1. Involved in the gluconeogenesis. Catalyzes stereospecifically the conversion of dihydroxyacetone phosphate (DHAP) to D-glyceraldehyde-3-phosphate (G3P). The chain is Triosephosphate isomerase from Enterococcus faecalis (strain ATCC 700802 / V583).